We begin with the raw amino-acid sequence, 395 residues long: Chorismate synthase (395 aa).

NADP(+) contacts are provided by R40 and R46. Residues 99-120 (PREGRNAPLSRPRPGHADLTGM) are disordered. Residues 134–136 (RSS), 256–257 (QA), G301, 316–320 (KPIPS), and R342 each bind FMN.

The protein belongs to the chorismate synthase family. Homotetramer. FMNH2 serves as cofactor.

It catalyses the reaction 5-O-(1-carboxyvinyl)-3-phosphoshikimate = chorismate + phosphate. It functions in the pathway metabolic intermediate biosynthesis; chorismate biosynthesis; chorismate from D-erythrose 4-phosphate and phosphoenolpyruvate: step 7/7. In terms of biological role, catalyzes the anti-1,4-elimination of the C-3 phosphate and the C-6 proR hydrogen from 5-enolpyruvylshikimate-3-phosphate (EPSP) to yield chorismate, which is the branch point compound that serves as the starting substrate for the three terminal pathways of aromatic amino acid biosynthesis. This reaction introduces a second double bond into the aromatic ring system. This Bifidobacterium longum (strain DJO10A) protein is Chorismate synthase.